Consider the following 30-residue polypeptide: Cyclotide hyen-G (30 aa).

The segment at residues 1–30 (GLPCGESCVYIPCISTVLGCSCSNKVCYRD) is a cross-link (cyclopeptide (Gly-Asp)). 3 disulfides stabilise this stretch: C4-C20, C8-C22, and C13-C27.

Post-translationally, this is a cyclic peptide. Detected in stems (at protein level).

In terms of biological role, probably participates in a plant defense mechanism. The polypeptide is Cyclotide hyen-G (Pigea enneasperma (Spade flower)).